The primary structure comprises 575 residues: Carboxylesterase 5A (575 aa).

The first 27 residues, 1-27 (MSGEWGHLGQTLIWAVWVLAAATEGPA), serve as a signal peptide directing secretion. Residue Asn82 is glycosylated (N-linked (GlcNAc...) asparagine). Cysteines 94 and 121 form a disulfide. Catalysis depends on Ser226, which acts as the Acyl-ester intermediate. A disulfide bridge links Cys280 with Cys291. The N-linked (GlcNAc...) asparagine glycan is linked to Asn281. Glu345 acts as the Charge relay system in catalysis. Asn363 is a glycosylation site (N-linked (GlcNAc...) asparagine). The active-site Charge relay system is the His454. N-linked (GlcNAc...) asparagine glycosylation occurs at Asn524.

Belongs to the type-B carboxylesterase/lipase family. N-glycosylated.

Its subcellular location is the secreted. It catalyses the reaction a carboxylic ester + H2O = an alcohol + a carboxylate + H(+). Involved in the detoxification of xenobiotics and in the activation of ester and amide prodrugs. This is Carboxylesterase 5A (CES5A) from Canis lupus familiaris (Dog).